A 257-amino-acid polypeptide reads, in one-letter code: NH(3)-dependent NAD(+) synthetase (257 aa).

ATP is bound at residue 32 to 39 (GLSGGVDS). Position 38 (aspartate 38) interacts with Mg(2+). Residue arginine 113 participates in deamido-NAD(+) binding. Position 133 (threonine 133) interacts with ATP. Glutamate 138 is a binding site for Mg(2+). Residues lysine 162 and serine 184 each contribute to the ATP site.

This sequence belongs to the NAD synthetase family. As to quaternary structure, homodimer.

The enzyme catalyses deamido-NAD(+) + NH4(+) + ATP = AMP + diphosphate + NAD(+) + H(+). It participates in cofactor biosynthesis; NAD(+) biosynthesis; NAD(+) from deamido-NAD(+) (ammonia route): step 1/1. Functionally, catalyzes the ATP-dependent amidation of deamido-NAD to form NAD. Uses ammonia as a nitrogen source. The polypeptide is NH(3)-dependent NAD(+) synthetase (Wolinella succinogenes (strain ATCC 29543 / DSM 1740 / CCUG 13145 / JCM 31913 / LMG 7466 / NCTC 11488 / FDC 602W) (Vibrio succinogenes)).